The following is a 419-amino-acid chain: UDP-N-acetylglucosamine 1-carboxyvinyltransferase (419 aa).

22-23 (KN) lines the phosphoenolpyruvate pocket. Arg91 provides a ligand contact to UDP-N-acetyl-alpha-D-glucosamine. Residue Cys115 is the Proton donor of the active site. At Cys115 the chain carries 2-(S-cysteinyl)pyruvic acid O-phosphothioketal. Residues 120–124 (RPVDL), 160–163 (KVSV), Asp305, and Val327 contribute to the UDP-N-acetyl-alpha-D-glucosamine site.

It belongs to the EPSP synthase family. MurA subfamily.

The protein localises to the cytoplasm. It catalyses the reaction phosphoenolpyruvate + UDP-N-acetyl-alpha-D-glucosamine = UDP-N-acetyl-3-O-(1-carboxyvinyl)-alpha-D-glucosamine + phosphate. Its pathway is cell wall biogenesis; peptidoglycan biosynthesis. Cell wall formation. Adds enolpyruvyl to UDP-N-acetylglucosamine. The polypeptide is UDP-N-acetylglucosamine 1-carboxyvinyltransferase (Escherichia coli O157:H7).